A 542-amino-acid chain; its full sequence is Chaperonin GroEL (542 aa).

ATP contacts are provided by residues 29 to 32, lysine 50, 86 to 90, glycine 415, and aspartate 495; these read TLGP and DGTTT.

Belongs to the chaperonin (HSP60) family. As to quaternary structure, forms a cylinder of 14 subunits composed of two heptameric rings stacked back-to-back. Interacts with the co-chaperonin GroES.

It localises to the cytoplasm. The enzyme catalyses ATP + H2O + a folded polypeptide = ADP + phosphate + an unfolded polypeptide.. In terms of biological role, together with its co-chaperonin GroES, plays an essential role in assisting protein folding. The GroEL-GroES system forms a nano-cage that allows encapsulation of the non-native substrate proteins and provides a physical environment optimized to promote and accelerate protein folding. This chain is Chaperonin GroEL, found in Azobacteroides pseudotrichonymphae genomovar. CFP2.